The following is a 473-amino-acid chain: Glycine--tRNA ligase (473 aa).

Substrate is bound by residues Arg101 and Glu172. Residues 204–206, 214–219, 289–290, and 333–336 contribute to the ATP site; these read RNE, FRTREF, EL, and GVER. 219–223 provides a ligand contact to substrate; it reads FEQME. Position 329-333 (329-333) interacts with substrate; sequence EPSVG.

Belongs to the class-II aminoacyl-tRNA synthetase family. In terms of assembly, homodimer.

It localises to the cytoplasm. The enzyme catalyses tRNA(Gly) + glycine + ATP = glycyl-tRNA(Gly) + AMP + diphosphate. Catalyzes the attachment of glycine to tRNA(Gly). This Ureaplasma urealyticum serovar 10 (strain ATCC 33699 / Western) protein is Glycine--tRNA ligase.